A 156-amino-acid chain; its full sequence is Arginine repressor (156 aa).

Belongs to the ArgR family.

The protein localises to the cytoplasm. It participates in amino-acid biosynthesis; L-arginine biosynthesis [regulation]. Functionally, regulates arginine biosynthesis genes. The chain is Arginine repressor from Shewanella loihica (strain ATCC BAA-1088 / PV-4).